A 343-amino-acid polypeptide reads, in one-letter code: Dihydroorotase (343 aa).

Residues His13 and His15 each coordinate Zn(2+). Substrate contacts are provided by residues 15 to 17 (HLR) and Asn41. The Zn(2+) site is built by Lys99, His136, and His174. The residue at position 99 (Lys99) is an N6-carboxylysine. His136 lines the substrate pocket. Leu219 is a binding site for substrate. Position 247 (Asp247) interacts with Zn(2+). Residue Asp247 is part of the active site. Positions 251 and 263 each coordinate substrate.

The protein belongs to the metallo-dependent hydrolases superfamily. DHOase family. Class II DHOase subfamily. As to quaternary structure, homodimer. Zn(2+) is required as a cofactor.

It carries out the reaction (S)-dihydroorotate + H2O = N-carbamoyl-L-aspartate + H(+). It participates in pyrimidine metabolism; UMP biosynthesis via de novo pathway; (S)-dihydroorotate from bicarbonate: step 3/3. Functionally, catalyzes the reversible cyclization of carbamoyl aspartate to dihydroorotate. The polypeptide is Dihydroorotase (Shewanella baltica (strain OS223)).